The sequence spans 84 residues: Cytochrome b559 subunit alpha (84 aa).

Residues 22–36 form a helical membrane-spanning segment; the sequence is IIHIPAITILFASGF. A heme-binding site is contributed by histidine 24.

This sequence belongs to the PsbE/PsbF family. Heterodimer of an alpha subunit and a beta subunit. PSII is composed of 1 copy each of membrane proteins PsbA, PsbB, PsbC, PsbD, PsbE, PsbF, PsbH, PsbI, PsbJ, PsbK, PsbL, PsbM, PsbT, PsbX, Psb30/Ycf12, peripheral proteins PsbO, CyanoQ (PsbQ), PsbU, PsbV and a large number of cofactors. It forms dimeric complexes. Heme b serves as cofactor.

Its subcellular location is the cell inner membrane. This b-type cytochrome is tightly associated with the reaction center of photosystem II (PSII). PSII is a light-driven water:plastoquinone oxidoreductase that uses light energy to abstract electrons from H(2)O, generating O(2) and a proton gradient subsequently used for ATP formation. It consists of a core antenna complex that captures photons, and an electron transfer chain that converts photonic excitation into a charge separation. The sequence is that of Cytochrome b559 subunit alpha from Gloeobacter violaceus (strain ATCC 29082 / PCC 7421).